Here is a 290-residue protein sequence, read N- to C-terminus: tRNA dimethylallyltransferase (290 aa).

ATP is bound at residue 9-16 (GPTASGKT). Position 11–16 (11–16 (TASGKT)) interacts with substrate. Positions 34 to 37 (DSTQ) are interaction with substrate tRNA.

The protein belongs to the IPP transferase family. Monomer. The cofactor is Mg(2+).

The enzyme catalyses adenosine(37) in tRNA + dimethylallyl diphosphate = N(6)-dimethylallyladenosine(37) in tRNA + diphosphate. In terms of biological role, catalyzes the transfer of a dimethylallyl group onto the adenine at position 37 in tRNAs that read codons beginning with uridine, leading to the formation of N6-(dimethylallyl)adenosine (i(6)A). The polypeptide is tRNA dimethylallyltransferase (Phytoplasma australiense).